The following is a 552-amino-acid chain: Pyrophosphate--fructose 6-phosphate 1-phosphotransferase subunit beta (552 aa).

G90 provides a ligand contact to diphosphate. D184 lines the Mg(2+) pocket. Residues 212 to 214 (TID), 251 to 252 (KY), 259 to 261 (MGR), E320, and 425 to 428 (YEGR) contribute to the substrate site. Residue D214 is the Proton acceptor of the active site.

Belongs to the phosphofructokinase type A (PFKA) family. PPi-dependent PFK group II subfamily. Clade 'Long' sub-subfamily. Tetramer of two alpha (regulatory) and two beta (catalytic) chains. Mg(2+) is required as a cofactor.

It is found in the cytoplasm. It catalyses the reaction beta-D-fructose 6-phosphate + diphosphate = beta-D-fructose 1,6-bisphosphate + phosphate + H(+). It participates in carbohydrate degradation; glycolysis; D-glyceraldehyde 3-phosphate and glycerone phosphate from D-glucose: step 3/4. Its activity is regulated as follows. Allosterically activated by fructose 2,6-bisphosphate. Functionally, catalytic subunit of pyrophosphate--fructose 6-phosphate 1-phosphotransferase. Catalyzes the phosphorylation of D-fructose 6-phosphate, the first committing step of glycolysis. Uses inorganic phosphate (PPi) as phosphoryl donor instead of ATP like common ATP-dependent phosphofructokinases (ATP-PFKs), which renders the reaction reversible, and can thus function both in glycolysis and gluconeogenesis. The protein is Pyrophosphate--fructose 6-phosphate 1-phosphotransferase subunit beta of Ricinus communis (Castor bean).